Here is a 637-residue protein sequence, read N- to C-terminus: MSTLLDTITCPADLKKIPRDQLPALAEEIRAFLLETVSRTGGHLASNLGVVELSIALHYCFDSPTDRFVWDVGHQAYTHKILTGRRDRFHTQRQYGGISGFPKRSESSHDAFDTGHSSTSISAGLGMAMARELRGGSNKVVAVIGDGSMTGGIAFEALNQAGHLKKNLIVVLNDNEMSISPNVGAFSSFVSRKLTGSYFRELKKEVQGLLQNIPAIGKDILQFARRAENSLKGFLTPGMLFEALGFDYIGPIQGHNLPQLLEVFENARGLDGPVVVHVMTTKGKGYVPAETNPSAFHGVGPFDVATGKTTGSKPGAASYTGIFGDTLAQLARENEKIVAITAAMPDGTGLTGFAKEFPERFFDVGIAEQHAVTFAAGLAAEGFRPVTAIYSTFLQRAYDQVFHDVCLQNLPVVFALDRGGVVGDDGPTHHGVFDLSYLRHLPGMTLMAPKDENELRHMLKTAVSHDGPIALRYPRGAGCGIPLDQELREIPIGTGEILAEGDDVAIIAIGITVLPALEAARTLAEKGIRATVINARFVKPLDREMILQAARRTGCIITAEENALQGGFGSAVLELLADEGMTGVRVKRLGIPDRFVEQGPQPQLRADLGIDAAGIAAATEAFLAAKGAPAPALSMVK.

Thiamine diphosphate contacts are provided by residues H74 and 115–117 (GHS). Residue D146 participates in Mg(2+) binding. Thiamine diphosphate-binding positions include 147 to 148 (GS), N175, Y286, and E368. N175 is a binding site for Mg(2+).

Belongs to the transketolase family. DXPS subfamily. In terms of assembly, homodimer. Requires Mg(2+) as cofactor. Thiamine diphosphate is required as a cofactor.

It carries out the reaction D-glyceraldehyde 3-phosphate + pyruvate + H(+) = 1-deoxy-D-xylulose 5-phosphate + CO2. The protein operates within metabolic intermediate biosynthesis; 1-deoxy-D-xylulose 5-phosphate biosynthesis; 1-deoxy-D-xylulose 5-phosphate from D-glyceraldehyde 3-phosphate and pyruvate: step 1/1. Its function is as follows. Catalyzes the acyloin condensation reaction between C atoms 2 and 3 of pyruvate and glyceraldehyde 3-phosphate to yield 1-deoxy-D-xylulose-5-phosphate (DXP). The sequence is that of 1-deoxy-D-xylulose-5-phosphate synthase 1 from Geobacter sulfurreducens (strain ATCC 51573 / DSM 12127 / PCA).